The following is a 292-amino-acid chain: NAD kinase (292 aa).

D73 functions as the Proton acceptor in the catalytic mechanism. Residues 73–74, 147–148, H158, R175, D177, 188–193, and Q247 contribute to the NAD(+) site; these read DG, NE, and TAYSLS.

This sequence belongs to the NAD kinase family. It depends on a divalent metal cation as a cofactor.

The protein localises to the cytoplasm. The enzyme catalyses NAD(+) + ATP = ADP + NADP(+) + H(+). Involved in the regulation of the intracellular balance of NAD and NADP, and is a key enzyme in the biosynthesis of NADP. Catalyzes specifically the phosphorylation on 2'-hydroxyl of the adenosine moiety of NAD to yield NADP. The sequence is that of NAD kinase from Escherichia coli O7:K1 (strain IAI39 / ExPEC).